The primary structure comprises 559 residues: Transcription factor tstO (559 aa).

A DNA-binding region (zn(2)-C6 fungal-type) is located at residues 23-50 (CDACQSAKVRCGREKPTCRRCQNQGKTC). Disordered regions lie at residues 166–316 (GPST…TGFS) and 453–477 (ASPPPSIFDNNNTSTTTTTSSISTA). The segment covering 222–232 (SSESLSLEPSS) has biased composition (low complexity). The span at 255 to 267 (TRGSQKISPNPHS) shows a compositional bias: polar residues. The segment covering 268–279 (IDSRTSSRDKSF) has biased composition (basic and acidic residues). 2 stretches are compositionally biased toward low complexity: residues 286–316 (STLGSRTPNTTTTSSSASSVGLTGSSTTGFS) and 462–477 (NNNTSTTTTTSSISTA).

The protein localises to the nucleus. Transcription factore; part of the gene cluster that mediates the biosynthesis of the antihypercholesterolemic agents phomoidrides which are dimeric anhydrides. Probably regulates the expression of the genes from the cluster. In Talaromyces stipitatus (strain ATCC 10500 / CBS 375.48 / QM 6759 / NRRL 1006) (Penicillium stipitatum), this protein is Transcription factor tstO.